The primary structure comprises 301 residues: Ribonuclease HIII (301 aa).

The 212-residue stretch at 90 to 301 (TPHIGIDESG…LDAILGKVGK (212 aa)) folds into the RNase H type-2 domain. A divalent metal cation contacts are provided by D96, E97, and D198.

Belongs to the RNase HII family. RnhC subfamily. Mn(2+) is required as a cofactor. The cofactor is Mg(2+).

The protein resides in the cytoplasm. The catalysed reaction is Endonucleolytic cleavage to 5'-phosphomonoester.. Endonuclease that specifically degrades the RNA of RNA-DNA hybrids. The chain is Ribonuclease HIII from Protochlamydia amoebophila (strain UWE25).